The sequence spans 304 residues: Cytochrome c biogenesis protein CcsA (304 aa).

The next 8 membrane-spanning stretches (helical) occupy residues 8–28, 37–57, 63–83, 96–116, 141–161, 212–232, 246–263, and 275–295; these read LVTS…PIAF, PGVV…QLVL, GHFP…ACTL, IVAA…SFAL, VIMV…AVLV, TITV…VWAN, TWAL…HTRL, and VAVV…LLGI.

This sequence belongs to the CcmF/CycK/Ccl1/NrfE/CcsA family. In terms of assembly, may interact with ccs1.

Its subcellular location is the cellular thylakoid membrane. Functionally, required during biogenesis of c-type cytochromes (cytochrome c6 and cytochrome f) at the step of heme attachment. The chain is Cytochrome c biogenesis protein CcsA from Synechococcus sp. (strain CC9902).